We begin with the raw amino-acid sequence, 434 residues long: D-amino acid dehydrogenase (434 aa).

3-17 lines the FAD pocket; it reads VLVLGSGVIGTASAY.

The protein belongs to the DadA oxidoreductase family. The cofactor is FAD.

The catalysed reaction is a D-alpha-amino acid + A + H2O = a 2-oxocarboxylate + AH2 + NH4(+). The protein operates within amino-acid degradation; D-alanine degradation; NH(3) and pyruvate from D-alanine: step 1/1. Oxidative deamination of D-amino acids. The protein is D-amino acid dehydrogenase of Pseudomonas entomophila (strain L48).